A 526-amino-acid polypeptide reads, in one-letter code: MFS-type transporter clz19 (526 aa).

The disordered stretch occupies residues 1-49; the sequence is MNVDTTSPQAPLAGVESKQDGASNEATAKAESTTHDQNESSSFDERPVH. Over residues 32–49 the composition is skewed to basic and acidic residues; sequence STTHDQNESSSFDERPVH. The N-linked (GlcNAc...) asparagine glycan is linked to N38. The helical transmembrane segment at 59–79 threads the bilayer; the sequence is ALLAVASFAAAISPASTTTYY. The N-linked (GlcNAc...) asparagine glycan is linked to N97. The next 3 helical transmembrane spans lie at 126–143, 186–206, and 214–234; these read VYLV…GLAL, AYLT…GGLL, and AIFW…LTFF. N238 and N253 each carry an N-linked (GlcNAc...) asparagine glycan. The next 6 membrane-spanning stretches (helical) occupy residues 294–314, 322–342, 384–404, 411–431, 446–466, and 473–493; these read FIVC…ISIF, YGYS…GSIL, LTVS…YGWL, VASV…VLIA, ALGA…VAAV, and IGIG…LPAL.

It belongs to the major facilitator superfamily.

It localises to the membrane. MFS-type transporter; part of the gene cluster that mediates the biosynthesis of squalestatin S1 (SQS1, also known as zaragozic acid A), a heavily oxidized fungal polyketide that offers potent cholesterol lowering activity by targeting squalene synthase (SS). The chain is MFS-type transporter clz19 from Cochliobolus lunatus (Filamentous fungus).